The chain runs to 222 residues: Kunitz trypsin inhibitor 3 (222 aa).

The signal sequence occupies residues 1 to 23; sequence MEKLTLSFITLTVLSAIFTAASA. N-linked (GlcNAc...) asparagine glycosylation occurs at Asn65. Intrachain disulfides connect Cys72-Cys119 and Cys165-Cys173. An N-linked (GlcNAc...) asparagine glycan is attached at Asn175.

It belongs to the protease inhibitor I3 (leguminous Kunitz-type inhibitor) family.

In terms of biological role, exhibits Kunitz trypsin protease inhibitor activity. This is Kunitz trypsin inhibitor 3 from Arabidopsis thaliana (Mouse-ear cress).